The sequence spans 165 residues: Ubiquitin-fold modifier-conjugating enzyme 1 (165 aa).

The Glycyl thioester intermediate role is filled by Cys-116.

It belongs to the ubiquitin-conjugating enzyme family. UFC1 subfamily.

In terms of biological role, E2-like enzyme which forms an intermediate with UFM1 via a thioester linkage. The protein is Ubiquitin-fold modifier-conjugating enzyme 1 of Drosophila mojavensis (Fruit fly).